The following is a 79-amino-acid chain: uncharacterized protein (79 aa).

The tract at residues 51–79 is disordered; it reads PAQFPKVQRPPTLLGGKNTSTQTTLHPVI. A compositionally biased stretch (polar residues) spans 67 to 79; that stretch reads KNTSTQTTLHPVI.

This is an uncharacterized protein from Homo sapiens (Human).